Consider the following 241-residue polypeptide: tRNA (guanine-N(7)-)-methyltransferase (241 aa).

Residues 1–20 are disordered; the sequence is MTESNDTPIQPEAGDERQHR. S-adenosyl-L-methionine is bound by residues E71, E96, D123, and D146. D146 is a catalytic residue. Substrate-binding positions include K150, D182, and 219–222; that span reads TKFE.

This sequence belongs to the class I-like SAM-binding methyltransferase superfamily. TrmB family.

The catalysed reaction is guanosine(46) in tRNA + S-adenosyl-L-methionine = N(7)-methylguanosine(46) in tRNA + S-adenosyl-L-homocysteine. It participates in tRNA modification; N(7)-methylguanine-tRNA biosynthesis. In terms of biological role, catalyzes the formation of N(7)-methylguanine at position 46 (m7G46) in tRNA. This chain is tRNA (guanine-N(7)-)-methyltransferase, found in Pseudomonas fluorescens (strain ATCC BAA-477 / NRRL B-23932 / Pf-5).